The primary structure comprises 640 residues: 1-deoxy-D-xylulose-5-phosphate synthase (640 aa).

Residues H79 and 120-122 each bind thiamine diphosphate; that span reads AHS. D151 provides a ligand contact to Mg(2+). Residues 152-153, N180, Y289, and E371 contribute to the thiamine diphosphate site; that span reads GA. N180 contributes to the Mg(2+) binding site.

The protein belongs to the transketolase family. DXPS subfamily. As to quaternary structure, homodimer. Mg(2+) serves as cofactor. The cofactor is thiamine diphosphate.

It catalyses the reaction D-glyceraldehyde 3-phosphate + pyruvate + H(+) = 1-deoxy-D-xylulose 5-phosphate + CO2. Its pathway is metabolic intermediate biosynthesis; 1-deoxy-D-xylulose 5-phosphate biosynthesis; 1-deoxy-D-xylulose 5-phosphate from D-glyceraldehyde 3-phosphate and pyruvate: step 1/1. Its function is as follows. Catalyzes the acyloin condensation reaction between C atoms 2 and 3 of pyruvate and glyceraldehyde 3-phosphate to yield 1-deoxy-D-xylulose-5-phosphate (DXP). This Erythrobacter litoralis (strain HTCC2594) protein is 1-deoxy-D-xylulose-5-phosphate synthase.